An 838-amino-acid chain; its full sequence is Outer membrane usher protein YraJ (838 aa).

Positions 1 to 40 (MPQRHHQGHKRTPKQLALIIKRCLPMVLTGSGMLCTTANA) are cleaved as a signal peptide. A disulfide bond links Cys-815 and Cys-837.

It belongs to the fimbrial export usher family.

Its subcellular location is the cell outer membrane. Part of the yraHIJK fimbrial operon. Could contribute to adhesion to various surfaces in specific environmental niches. Increases adhesion to eukaryotic T24 bladder epithelial cells in the absence of fim operon. Probably involved in the export and assembly of fimbrial subunits across the outer membrane. The protein is Outer membrane usher protein YraJ (yraJ) of Escherichia coli (strain K12).